The sequence spans 832 residues: Putative pentatricopeptide repeat-containing protein At5g08310, mitochondrial (832 aa).

The transit peptide at 1–27 (MAFSRIALLCQRFSRQQQQRQLLHRPL) directs the protein to the mitochondrion. PPR repeat units follow at residues 105 to 139 (DMYA…RCFM), 140 to 174 (SPGA…GLCV), 176 to 212 (NAYT…GFHF), 213 to 247 (DKFT…GWLD), 252 to 281 (TILV…DIRL), 282 to 316 (NYKT…GMNA), 317 to 351 (DIAL…GIPP), 352 to 383 (DRGI…IDKK), 385 to 415 (VMLL…LMGN), 438 to 472 (DSDS…GLIP), 473 to 507 (GPMM…GVEP), 508 to 542 (SQFT…GFEP), 543 to 577 (WIKH…GFLG), 578 to 612 (HMVA…GHCP), 613 to 647 (DVIA…GLKP), 648 to 682 (TVAT…EKNP), 683 to 717 (DVIT…DCYP), 718 to 752 (NRIT…EMEP), and 753 to 787 (DSAV…GRFP).

This sequence belongs to the PPR family. P subfamily.

It localises to the mitochondrion. The sequence is that of Putative pentatricopeptide repeat-containing protein At5g08310, mitochondrial from Arabidopsis thaliana (Mouse-ear cress).